The following is a 246-amino-acid chain: 4-hydroxy-tetrahydrodipicolinate reductase (246 aa).

Position 7-12 (7-12 (GCSGRM)) interacts with NAD(+). Arginine 34 lines the NADP(+) pocket. NAD(+) contacts are provided by residues 76 to 78 (ATT) and 102 to 105 (CPNT). The active-site Proton donor/acceptor is histidine 135. A (S)-2,3,4,5-tetrahydrodipicolinate-binding site is contributed by histidine 136. Residue lysine 139 is the Proton donor of the active site. 145–146 (GT) is a binding site for (S)-2,3,4,5-tetrahydrodipicolinate.

This sequence belongs to the DapB family.

The protein resides in the cytoplasm. It catalyses the reaction (S)-2,3,4,5-tetrahydrodipicolinate + NAD(+) + H2O = (2S,4S)-4-hydroxy-2,3,4,5-tetrahydrodipicolinate + NADH + H(+). It carries out the reaction (S)-2,3,4,5-tetrahydrodipicolinate + NADP(+) + H2O = (2S,4S)-4-hydroxy-2,3,4,5-tetrahydrodipicolinate + NADPH + H(+). It participates in amino-acid biosynthesis; L-lysine biosynthesis via DAP pathway; (S)-tetrahydrodipicolinate from L-aspartate: step 4/4. Functionally, catalyzes the conversion of 4-hydroxy-tetrahydrodipicolinate (HTPA) to tetrahydrodipicolinate. This Chlamydia abortus (strain DSM 27085 / S26/3) (Chlamydophila abortus) protein is 4-hydroxy-tetrahydrodipicolinate reductase.